The following is a 154-amino-acid chain: Transcriptional repressor NrdR (154 aa).

Residues 3–34 (CPFCAHPDTRVADSRLMEERNAVRRRRHCPNC) fold into a zinc finger. The ATP-cone domain occupies 49–139 (PAVIGPDKKR…LHKRFDNPAD (91 aa)).

Belongs to the NrdR family. Requires Zn(2+) as cofactor.

Functionally, negatively regulates transcription of bacterial ribonucleotide reductase nrd genes and operons by binding to NrdR-boxes. The protein is Transcriptional repressor NrdR of Neisseria meningitidis serogroup B (strain ATCC BAA-335 / MC58).